We begin with the raw amino-acid sequence, 145 residues long: Large ribosomal subunit protein uL15 (145 aa).

The interval 1-57 (MKLNDLSPAPGSRREKHRPGRGIGSGLGKTGGRGHKGQTSRSGGTIAPGFEGGQQPL) is disordered. Over residues 21-31 (RGIGSGLGKTG) the composition is skewed to gly residues.

Belongs to the universal ribosomal protein uL15 family. In terms of assembly, part of the 50S ribosomal subunit.

Its function is as follows. Binds to the 23S rRNA. This is Large ribosomal subunit protein uL15 from Pseudomonas fluorescens (strain Pf0-1).